Reading from the N-terminus, the 117-residue chain is Protein P16 (117 aa).

A helical membrane pass occupies residues 7–24; the sequence is LYWVGGGLVLILIWLWFR.

It is found in the virion membrane. In terms of biological role, protein of the infection vertex complex, which increases the vertex stability. Anchors the vertex structure to the viral membrane. Essential for viral infectivity. The polypeptide is Protein P16 (XVI) (Enterobacteria phage PRD1 (Bacteriophage PRD1)).